A 60-amino-acid polypeptide reads, in one-letter code: UPF0434 protein Daci_3569 (60 aa).

The protein belongs to the UPF0434 family.

The sequence is that of UPF0434 protein Daci_3569 from Delftia acidovorans (strain DSM 14801 / SPH-1).